Here is a 752-residue protein sequence, read N- to C-terminus: Exocyst complex component EXO84B (752 aa).

2 disordered regions span residues 511–532 (QTGQ…NPEQ) and 724–752 (TKGN…HGSY). Residues 515-532 (RTDDLRRPLDRQNRNPEQ) are compositionally biased toward basic and acidic residues. The span at 733 to 752 (SPTASVSAQSVSSARSHGSY) shows a compositional bias: low complexity.

The protein belongs to the EXO84 family. In terms of assembly, the exocyst complex is composed of SEC3, SEC5, SEC6, SEC8, SEC10, EXO70A1 and EXO84B. Interacts with SEC6, SEC10, SEC15B and EXO70A1. Interacts with EXO70B1. Binds directly to B1L.

It is found in the cytoplasm. It localises to the cytosol. Its subcellular location is the perinuclear region. The protein resides in the cytoskeleton. The protein localises to the phragmoplast. It is found in the secreted. It localises to the cell wall. Its subcellular location is the cell membrane. In terms of biological role, component of the exocyst complex involved in the docking of exocytic vesicles with fusion sites on the plasma membrane during regulated or polarized secretion. Involved in polarized cell growth and organ morphogenesis. During cytokinesis, involved in cell plate initiation, cell plate maturation and formation of new primary cell wall. Probable component of an exocyst subcomplex specifically involved in autophagy-related, Golgi-independent membrane traffic to the vacuole. Regulates autophagosome formation and autophagy-related Golgi-independent import into the vacuole. Mediates ABCG36/PEN3 outer-membrane polarity at the periphery of lateral root cap and root epidermal cells. The polypeptide is Exocyst complex component EXO84B (Arabidopsis thaliana (Mouse-ear cress)).